Consider the following 406-residue polypeptide: Sprouty-related, EVH1 domain-containing protein 1 (406 aa).

The WH1 domain maps to 3–120 (GEQEPDDSYA…RGIRRAIEDL (118 aa)). The segment at 124–154 (LPASCHGESETSEDGPQVNKEDHYSTHNNDH) is disordered. Residues 142–154 (NKEDHYSTHNNDH) are compositionally biased toward basic and acidic residues. One can recognise a KBD domain in the interval 195-247 (PIRHVSFQDEDEIVRINPRDMIIRRYADYRHPDIFRNDVDREEPEDVTFFTKT). The region spanning 296 to 404 (SCVYCQERFN…CGCCGGKHKA (109 aa)) is the SPR domain.

Post-translationally, palmitoylated by ZDHHC17/HIP14. In terms of processing, ubiquitinated. Phosphorylated on tyrosine.

It localises to the cell membrane. In terms of biological role, tyrosine kinase substrate that inhibits growth-factor-mediated activation of MAP kinase. This Xenopus tropicalis (Western clawed frog) protein is Sprouty-related, EVH1 domain-containing protein 1 (spred1).